We begin with the raw amino-acid sequence, 245 residues long: Eukaryotic translation initiation factor 6 (245 aa).

Belongs to the eIF-6 family. As to quaternary structure, monomer. Associates with the 60S ribosomal subunit.

Its subcellular location is the cytoplasm. The protein localises to the nucleus. The protein resides in the nucleolus. In terms of biological role, binds to the 60S ribosomal subunit and prevents its association with the 40S ribosomal subunit to form the 80S initiation complex in the cytoplasm. May also be involved in ribosome biogenesis. The protein is Eukaryotic translation initiation factor 6 of Ostreococcus lucimarinus (strain CCE9901).